The sequence spans 247 residues: Transcription factor otaR1 (247 aa).

Disordered stretches follow at residues 1–48 (MEPA…ETSM) and 100–143 (DNAS…PLGN). The span at 23-47 (DESSSTGLSLGSLLSSSNDLSSETS) shows a compositional bias: low complexity. A compositionally biased stretch (polar residues) spans 134–143 (ANPTSVPLGN). Residues 156-196 (KKYHEKYKERNRVAAGKSRQKQVDLIELLQAEQREEERRRK) are basic motif. In terms of domain architecture, bZIP spans 156–219 (KKYHEKYKER…LDLKQELQHH (64 aa)). Residues 198 to 212 (LERELSQIHKELLDL) form a leucine-zipper region.

The protein localises to the nucleus. Transcription factor; part of the gene cluster that mediates the biosynthesis of ochratoxin A (OTA), a mycotoxin demonstrated to have nephrotoxic, immunotoxic, genotoxic, neurotoxic, and teratogenic properties. Positively regulates the expression of the cluster genes otaA, otaB, otaC and otaD, and the subsequent production of OTA. This Aspergillus carbonarius (strain ITEM 5010) protein is Transcription factor otaR1.